The sequence spans 658 residues: DNA mismatch repair protein MutL (658 aa).

Over residues 114–130 (RQEDSSHATQVKAEDGK) the composition is skewed to basic and acidic residues. 2 disordered regions span residues 114–138 (RQED…TAAA) and 355–405 (PSEN…HSLS).

Belongs to the DNA mismatch repair MutL/HexB family.

In terms of biological role, this protein is involved in the repair of mismatches in DNA. It is required for dam-dependent methyl-directed DNA mismatch repair. May act as a 'molecular matchmaker', a protein that promotes the formation of a stable complex between two or more DNA-binding proteins in an ATP-dependent manner without itself being part of a final effector complex. The protein is DNA mismatch repair protein MutL of Neisseria gonorrhoeae (strain ATCC 700825 / FA 1090).